The sequence spans 539 residues: Chaperone Ric-8A (539 aa).

The interval 507–539 (MGITPSGNLAPMENAIRDMADERSSSDSDLGLD) is disordered. The span at 521 to 532 (AIRDMADERSSS) shows a compositional bias: basic and acidic residues.

This sequence belongs to the synembryn family.

It is found in the cytoplasm. It localises to the cell cortex. Its function is as follows. Chaperone that specifically binds and folds nascent G alpha proteins prior to G protein heterotrimer formation, promoting their stability and activity: folds GNAI1, GNAO1, GNA13 and GNAQ. Does not fold G(s) G-alpha proteins GNAS nor GNAL. Also acts as a guanine nucleotide exchange factor (GEF) for G alpha proteins by stimulating exchange of bound GDP for free GTP. The protein is Chaperone Ric-8A (RIC8A) of Gallus gallus (Chicken).